A 744-amino-acid chain; its full sequence is Tripartite motif-containing protein 2 (744 aa).

Ser-10 is subject to Phosphoserine. Residues 23 to 64 (CSICLERYKNPKVLPCLHTFCERCLQNYIPAHSLTLSCPVCR) form an RING-type zinc finger. The B box-type zinc-finger motif lies at 113-154 (GKPLSCPNHDGNVMDFYCQSCETAMCRECTEGEHAEHPTVPL). Zn(2+) is bound by residues Cys-118, His-121, Cys-141, and His-146. The Filamin repeat unit spans residues 320 to 421 (TTNAVASETV…IRGSPFKLKV (102 aa)). Thr-371 is modified (phosphothreonine). A phosphoserine mark is found at Ser-375, Ser-424, and Ser-428. Residues 432 to 462 (EGVKRRVKSPGSGHVKQKAVKRPASMYSTGK) form a disordered region. NHL repeat units follow at residues 473–516 (IFRV…FSND), 520–563 (KSRF…FSSD), 564–605 (GKFK…FQPN), 609–652 (VTRF…FNQE), 656–699 (MLKF…FDGS), and 700–743 (GSFL…YRYL).

This sequence belongs to the TRIM/RBCC family. As to quaternary structure, forms homooligomers. Interacts with TRIM3; this interaction reduces TRIM2 activity. Interacts with myosin V; myosin V may not be a substrate for ubiquitination. Interacts with NEFL. Interacts with phosphorylated BCL2L11. Interacts with SIRPA. RING-type zinc finger-dependent and UBE2D1-dependent autoubiquitination.

The protein localises to the cytoplasm. The catalysed reaction is S-ubiquitinyl-[E2 ubiquitin-conjugating enzyme]-L-cysteine + [acceptor protein]-L-lysine = [E2 ubiquitin-conjugating enzyme]-L-cysteine + N(6)-ubiquitinyl-[acceptor protein]-L-lysine.. It participates in protein modification; protein ubiquitination. Functionally, UBE2D1-dependent E3 ubiquitin-protein ligase that mediates the ubiquitination of NEFL and of phosphorylated BCL2L11. Plays a neuroprotective function. May play a role in neuronal rapid ischemic tolerance. Plays a role in antiviral immunity and limits New World arenavirus infection independently of its ubiquitin ligase activity. The sequence is that of Tripartite motif-containing protein 2 (TRIM2) from Ailuropoda melanoleuca (Giant panda).